The sequence spans 51 residues: Sec-independent protein translocase protein TatA (51 aa).

Residues 1-21 traverse the membrane as a helical segment; that stretch reads MGMSFSHLLIILLIIFVLFGA.

It belongs to the TatA/E family. The Tat system comprises two distinct complexes: a TatABC complex, containing multiple copies of TatA, TatB and TatC subunits, and a separate TatA complex, containing only TatA subunits. Substrates initially bind to the TatABC complex, which probably triggers association of the separate TatA complex to form the active translocon.

It localises to the cell inner membrane. Part of the twin-arginine translocation (Tat) system that transports large folded proteins containing a characteristic twin-arginine motif in their signal peptide across membranes. TatA could form the protein-conducting channel of the Tat system. This chain is Sec-independent protein translocase protein TatA, found in Rickettsia bellii (strain RML369-C).